The sequence spans 1357 residues: MAYSYTEKKRIRKDFSKLPDVMDVPYLLAIQLDSYREFLQAGASKDQFRDVGLHAAFKSVFPIISYSGNAALEYVGYRLGEPAFDVKECVLRGVTFAVPLRVKVRLIIFDKESSNKAIKDIKEQEVYMGEIPLMTENGTFVINGTERVIVSQLHRSPGVFFDHDRGKTHSSGKLLYSARIIPYRGSWLDFEFDPKDCVFVRIDRRRKLPASVLLRALGYSTEEVLNTFYTTNVFHISGEKLSLELVPQRLRGEVAVMDIHDETGKVIVEQGRRITARHVNQLEKAGVNQLDVPMEYVLGRTTAKAIVHPATGEIIAECNTELTTELLIKIAKAQVVRIETLYTNDIDCGPFISDTLKIDTTSNQLEALVEIYRMMRPGEPPTKDAAETLFNNLFFSAERYDLSAVGRMKFNRRIGRTEIEGSGVLSKEDIVEVLKTLVDIRNGKGIVDDIDHLGNRRVRCVGEMAENQFRVGLVRVERAVKERLSMAESEGLMPQDLINAKPVAAAVKEFFGSSQLSQFMDQNNPLSEITHKRRVSALGPGGLTRERAGFEVRDVHPTHYGRVCPIETPEGPNIGLINSLAAYARTNQYGFLESPYRVVKEGVVSDDIVFLSAIEEADHVIAQASAAMNDKKQLIDELVAVRHLNEFTVKAPEDVTLMDVSPKQVVSVAASLIPFLEHDDANRALMGSNMQRQAVPTLRADKPLVGTGMERNVARDSGVCVVARRGGVIDSVDASRIVVRVADDEVETGEAGVDIYNLTKYTRSNQNTCINQRPLVSKGDKVARGDIMADGPSTDMGELALGQNMRIAFMAWNGFNFEDSICLSERVVQEDRFTTIHIQELTCVARDTKLGPEEITADIPNVGEAALNKLDEAGIVYVGAEVGAGDILVGKVTPKGETQLTPEEKLLRAIFGEKASDVKDTSLRVPTGTKGTVIDVQVFTRDGVERDSRALAIEKMQLDEIRKDLNEEFRIVEGATFERLRSALNGQVVDGGAGLKKGTVITDEVLDGLEHGQWFKLRMAEDALNEQLEKAQQYIVDRRRLLDDKFEDKKRKLQQGDDLAPGVLKIVKVYLAIRRRIQPGDKMAGRHGNKGVVSVIMPVEDMPHDANGTPVDVVLNPLGVPSRMNVGQILETHLGLAAKGLGEKIDRMIEEQRKAAELRGFLTEIYNEIGGRQENLEEFTDEEILALAHNLKKGVPMATPVFDGAKEREIKAMLKLADLPESGQMVLFDGRTGNKFERPVTVGYMYMLKLNHLVDDKMHARSTGSYSLVTQQPLGGKAQFGGQRFGEMEVWALEAYGAAYTLQEMLTVKSDDVNGRTKMYKNIVDGDHRMEPGMPESFNVLIKEIRSLGIDIDLETE.

This sequence belongs to the RNA polymerase beta chain family. As to quaternary structure, the RNAP catalytic core consists of 2 alpha, 1 beta, 1 beta' and 1 omega subunit. When a sigma factor is associated with the core the holoenzyme is formed, which can initiate transcription.

It carries out the reaction RNA(n) + a ribonucleoside 5'-triphosphate = RNA(n+1) + diphosphate. In terms of biological role, DNA-dependent RNA polymerase catalyzes the transcription of DNA into RNA using the four ribonucleoside triphosphates as substrates. In Pseudomonas putida (strain W619), this protein is DNA-directed RNA polymerase subunit beta.